The sequence spans 198 residues: Probable GTP-binding protein EngB (198 aa).

One can recognise an EngB-type G domain in the interval 27 to 198; that stretch reads DLPEVALAGR…ESWDTILSEL (172 aa). Residues 35-42, 62-66, 80-83, 147-150, and 179-181 contribute to the GTP site; these read GRSNVGKS, GKTQL, DVPG, TKAD, and FSS. Residues serine 42 and threonine 64 each coordinate Mg(2+).

It belongs to the TRAFAC class TrmE-Era-EngA-EngB-Septin-like GTPase superfamily. EngB GTPase family. Mg(2+) is required as a cofactor.

Functionally, necessary for normal cell division and for the maintenance of normal septation. The polypeptide is Probable GTP-binding protein EngB (Streptococcus agalactiae serotype Ia (strain ATCC 27591 / A909 / CDC SS700)).